We begin with the raw amino-acid sequence, 362 residues long: Dihydroorotate dehydrogenase (quinone) (362 aa).

FMN is bound by residues 60–64 and threonine 84; that span reads AGFDK. Residue lysine 64 participates in substrate binding. Position 109-113 (109-113) interacts with substrate; sequence NRMGF. FMN-binding residues include asparagine 137 and asparagine 168. Position 168 (asparagine 168) interacts with substrate. The active-site Nucleophile is serine 171. Asparagine 173 contributes to the substrate binding site. The FMN site is built by lysine 213 and serine 241. 242–243 contributes to the substrate binding site; that stretch reads NT. Residues glycine 264, glycine 293, and 314–315 each bind FMN; that span reads YS.

Belongs to the dihydroorotate dehydrogenase family. Type 2 subfamily. Monomer. The cofactor is FMN.

The protein resides in the cell membrane. The enzyme catalyses (S)-dihydroorotate + a quinone = orotate + a quinol. It participates in pyrimidine metabolism; UMP biosynthesis via de novo pathway; orotate from (S)-dihydroorotate (quinone route): step 1/1. Functionally, catalyzes the conversion of dihydroorotate to orotate with quinone as electron acceptor. This is Dihydroorotate dehydrogenase (quinone) from Bartonella henselae (strain ATCC 49882 / DSM 28221 / CCUG 30454 / Houston 1) (Rochalimaea henselae).